Here is a 309-residue protein sequence, read N- to C-terminus: tRNA-cytidine(32) 2-sulfurtransferase (309 aa).

The short motif at 57 to 62 is the PP-loop motif element; the sequence is SGGKDS. 3 residues coordinate [4Fe-4S] cluster: C132, C135, and C223.

The protein belongs to the TtcA family. As to quaternary structure, homodimer. Mg(2+) serves as cofactor. It depends on [4Fe-4S] cluster as a cofactor.

It localises to the cytoplasm. It carries out the reaction cytidine(32) in tRNA + S-sulfanyl-L-cysteinyl-[cysteine desulfurase] + AH2 + ATP = 2-thiocytidine(32) in tRNA + L-cysteinyl-[cysteine desulfurase] + A + AMP + diphosphate + H(+). It functions in the pathway tRNA modification. In terms of biological role, catalyzes the ATP-dependent 2-thiolation of cytidine in position 32 of tRNA, to form 2-thiocytidine (s(2)C32). The sulfur atoms are provided by the cysteine/cysteine desulfurase (IscS) system. This is tRNA-cytidine(32) 2-sulfurtransferase from Variovorax paradoxus (strain S110).